We begin with the raw amino-acid sequence, 165 residues long: Ribosome maturation factor RimM (165 aa).

The PRC barrel domain occupies 92 to 163; it reads EARHYWADLE…RVVVDPPEGL (72 aa).

Belongs to the RimM family. In terms of assembly, binds ribosomal protein uS19.

It is found in the cytoplasm. Its function is as follows. An accessory protein needed during the final step in the assembly of 30S ribosomal subunit, possibly for assembly of the head region. Essential for efficient processing of 16S rRNA. May be needed both before and after RbfA during the maturation of 16S rRNA. It has affinity for free ribosomal 30S subunits but not for 70S ribosomes. The chain is Ribosome maturation factor RimM from Anaeromyxobacter sp. (strain Fw109-5).